The sequence spans 161 residues: DNA-directed RNA polymerase 18 kDa subunit (161 aa).

Belongs to the poxviridae DNA-directed RNA polymerase 18 kDa subunit family. As to quaternary structure, the DNA-dependent RNA polymerase used for intermediate and late genes expression consists of eight subunits Rpo30/OPG66, Rpo7/OPG90, Rpo22/OPG103, Rpo147/OPG105, Rpo18/OPG119, Rpo19/OPG131, Rpo132/OPG151 and Rpo35/OPG156. The same holoenzyme, with the addition of the transcription-specificity factor OPG109, is used for early gene expression.

The protein resides in the virion. The enzyme catalyses RNA(n) + a ribonucleoside 5'-triphosphate = RNA(n+1) + diphosphate. Part of the DNA-dependent RNA polymerase which catalyzes the transcription of viral DNA into RNA using the four ribonucleoside triphosphates as substrates. Responsible for the transcription of early, intermediate and late genes. DNA-dependent RNA polymerase associates with the early transcription factor (ETF), itself composed of OPG118 and OPG133, thereby allowing the early genes transcription. Late transcription, and probably also intermediate transcription, require newly synthesized RNA polymerase. The protein is DNA-directed RNA polymerase 18 kDa subunit (OPG119) of Vaccinia virus (strain Ankara) (VACV).